A 672-amino-acid polypeptide reads, in one-letter code: NADPH-Fe(3+) oxidoreductase subunit beta (672 aa).

4 residues coordinate [4Fe-4S] cluster: C203, C207, C211, and C215. 254–283 is an FAD binding site; sequence KKVAIVGAGPAGLACAYYLALEGYPCTIYE. NADP(+) is bound at residue 388-421; it reads GKKVVVVGGGNTAIDCVRVALREGAEESTLLYRR. Position 552 to 562 (552 to 562) interacts with FAD; sequence TDLEGVFAGGD.

In terms of assembly, heterotetramer with 2 alpha subunits. [4Fe-4S] cluster is required as a cofactor. The cofactor is FAD.

The protein resides in the cell membrane. In terms of biological role, probably involved in acetate metabolism and not in the reduction of Fe(3+) chelates. May serve as a major route for NADP regeneration. The polypeptide is NADPH-Fe(3+) oxidoreductase subunit beta (sfrB) (Geobacter sulfurreducens (strain DL-1 / KN400)).